The chain runs to 156 residues: Small ribosomal subunit protein uS7 (156 aa).

This sequence belongs to the universal ribosomal protein uS7 family. As to quaternary structure, part of the 30S ribosomal subunit. Contacts proteins S9 and S11.

In terms of biological role, one of the primary rRNA binding proteins, it binds directly to 16S rRNA where it nucleates assembly of the head domain of the 30S subunit. Is located at the subunit interface close to the decoding center, probably blocks exit of the E-site tRNA. The chain is Small ribosomal subunit protein uS7 from Thermobifida fusca (strain YX).